A 132-amino-acid chain; its full sequence is UPF0299 membrane protein YohJ (132 aa).

The next 4 helical transmembrane spans lie at 7–27 (IIWQ…AGIF), 31–51 (LLPV…VLLA), 63–83 (GCYV…VGVM), and 93–113 (FGPV…VMSW).

Belongs to the UPF0299 family.

It localises to the cell inner membrane. This chain is UPF0299 membrane protein YohJ, found in Shigella dysenteriae serotype 1 (strain Sd197).